A 65-amino-acid polypeptide reads, in one-letter code: Large ribosomal subunit protein bL35 (65 aa).

Residues 1 to 16 show a composition bias toward basic residues; that stretch reads MPKMKTKSGAKKRFRV. Positions 1-25 are disordered; that stretch reads MPKMKTKSGAKKRFRVRPGGTVKRG.

The protein belongs to the bacterial ribosomal protein bL35 family.

The protein is Large ribosomal subunit protein bL35 of Herminiimonas arsenicoxydans.